A 282-amino-acid chain; its full sequence is Pantothenate synthetase (282 aa).

30-37 (MGGLHQGH) serves as a coordination point for ATP. The active-site Proton donor is the histidine 37. Residue glutamine 61 coordinates (R)-pantoate. Glutamine 61 contributes to the beta-alanine binding site. 146–149 (GQKD) is an ATP binding site. Glutamine 152 is a (R)-pantoate binding site. ATP contacts are provided by residues isoleucine 175 and 183 to 186 (MSTR).

This sequence belongs to the pantothenate synthetase family. In terms of assembly, homodimer.

It localises to the cytoplasm. The catalysed reaction is (R)-pantoate + beta-alanine + ATP = (R)-pantothenate + AMP + diphosphate + H(+). It participates in cofactor biosynthesis; (R)-pantothenate biosynthesis; (R)-pantothenate from (R)-pantoate and beta-alanine: step 1/1. Its function is as follows. Catalyzes the condensation of pantoate with beta-alanine in an ATP-dependent reaction via a pantoyl-adenylate intermediate. The polypeptide is Pantothenate synthetase (Vesicomyosocius okutanii subsp. Calyptogena okutanii (strain HA)).